A 731-amino-acid polypeptide reads, in one-letter code: Anaphase-promoting complex subunit 2 (731 aa).

Belongs to the cullin family. In terms of assembly, the APC/C is probably composed of at least 12 subunits: apc-2, apc-10, apc-11, cdc-26, emb-1, emb-27, emb-30, mat-1, mat-2, mat-3, such-1 and gfi-3.

Its pathway is protein modification; protein ubiquitination. Functionally, probable component of the anaphase promoting complex/cyclosome (APC/C), a cell cycle-regulated ubiquitin ligase that controls progression through mitosis and the G1 phase of the cell cycle. The APC/C complex acts by mediating ubiquitination and subsequent degradation of target proteins. Developmental role in early embryogenesis and the metaphase to anaphase transition in meiosis and mitosis. The chain is Anaphase-promoting complex subunit 2 from Caenorhabditis elegans.